The chain runs to 506 residues: (+)-piperitol/(+)-sesamin synthase CYP81Q2 (506 aa).

The chain crosses the membrane as a helical span at residues 3-23; that stretch reads AEMLYSALALTFAIFMVYRIL. Cys-439 contacts heme.

It belongs to the cytochrome P450 family. Heme serves as cofactor. In terms of tissue distribution, expressed in seeds.

It localises to the membrane. The catalysed reaction is (+)-piperitol + reduced [NADPH--hemoprotein reductase] + O2 = (+)-sesamin + oxidized [NADPH--hemoprotein reductase] + 2 H2O + H(+). It catalyses the reaction (+)-pinoresinol + reduced [NADPH--hemoprotein reductase] + O2 = (+)-piperitol + oxidized [NADPH--hemoprotein reductase] + 2 H2O + H(+). Its function is as follows. Involved in the biosynthesis of (+)-sesamin, a furofuran class lignan. Functions in a dual catalytic mode. Catalyzes the synthesis of (+)-sesamin from (+)- pinoresinol by formation of two successive methylenedioxy bridges on (+)-pinoresinol and (+)-piperitol, respectively. The sequence is that of (+)-piperitol/(+)-sesamin synthase CYP81Q2 from Sesamum radiatum (Black benniseed).